The sequence spans 624 residues: PTS system mannitol-specific EIICBA component (624 aa).

The 324-residue stretch at 13–336 (FGRFLSNMVM…SFVIASFFLK (324 aa)) folds into the PTS EIIC type-2 domain. A run of 6 helical transmembrane segments spans residues 25-46 (IGAF…WLPN), 51-71 (KLVG…SGGK), 135-156 (SSGI…PAVK), 166-186 (VDIL…EPAK), 274-293 (VIAG…AGLV), and 314-335 (VGVL…SFFL). The region spanning 372–463 (QKIFVACDAG…LVQDLSNTKV (92 aa)) is the PTS EIIB type-2 domain. The active-site Phosphocysteine intermediate; for EIIB activity is the Cys-378. Cys-378 bears the Phosphocysteine; by EIIA mark. The 143-residue stretch at 482–624 (FVLTEKQVFL…VEKVLALLKA (143 aa)) folds into the PTS EIIA type-2 domain. Catalysis depends on His-542, which acts as the Tele-phosphohistidine intermediate; for EIIA activity. His-542 is modified (phosphohistidine; by HPr).

In terms of assembly, homodimer. An intramolecular phosphotransfer takes places between His-542 and Cys-378.

The protein localises to the cell inner membrane. The catalysed reaction is D-mannitol(out) + N(pros)-phospho-L-histidyl-[protein] = D-mannitol 1-phosphate(in) + L-histidyl-[protein]. The phosphoenolpyruvate-dependent sugar phosphotransferase system (sugar PTS), a major carbohydrate active transport system, catalyzes the phosphorylation of incoming sugar substrates concomitantly with their translocation across the cell membrane. This system is involved in D-mannitol transport. The chain is PTS system mannitol-specific EIICBA component (mtlA) from Pasteurella multocida (strain Pm70).